Here is a 48-residue protein sequence, read N- to C-terminus: Large ribosomal subunit protein bL34 (48 aa).

Belongs to the bacterial ribosomal protein bL34 family.

This is Large ribosomal subunit protein bL34 (rpmH) from Mycoplasma genitalium (strain ATCC 33530 / DSM 19775 / NCTC 10195 / G37) (Mycoplasmoides genitalium).